The chain runs to 287 residues: Flagellin (287 aa).

Belongs to the bacterial flagellin family.

Its subcellular location is the secreted. The protein resides in the bacterial flagellum. Flagellin is the subunit protein which polymerizes to form the filaments of bacterial flagella. In Listeria monocytogenes serovar 1/2a (strain ATCC BAA-679 / EGD-e), this protein is Flagellin (flaA).